The chain runs to 368 residues: Anhydro-N-acetylmuramic acid kinase (368 aa).

ATP is bound at residue Gly13–Asp20.

It belongs to the anhydro-N-acetylmuramic acid kinase family.

It carries out the reaction 1,6-anhydro-N-acetyl-beta-muramate + ATP + H2O = N-acetyl-D-muramate 6-phosphate + ADP + H(+). It functions in the pathway amino-sugar metabolism; 1,6-anhydro-N-acetylmuramate degradation. It participates in cell wall biogenesis; peptidoglycan recycling. Catalyzes the specific phosphorylation of 1,6-anhydro-N-acetylmuramic acid (anhMurNAc) with the simultaneous cleavage of the 1,6-anhydro ring, generating MurNAc-6-P. Is required for the utilization of anhMurNAc either imported from the medium or derived from its own cell wall murein, and thus plays a role in cell wall recycling. The chain is Anhydro-N-acetylmuramic acid kinase from Hahella chejuensis (strain KCTC 2396).